The sequence spans 247 residues: 14-3-3 protein zeta (247 aa).

The protein belongs to the 14-3-3 family. As to quaternary structure, homodimer.

Its subcellular location is the cytoplasm. Its function is as follows. Adapter protein implicated in the regulation of a large spectrum of both general and specialized signaling pathways. Binds to a large number of partners, usually by recognition of a phosphoserine or phosphothreonine motif. Binding generally results in the modulation of the activity of the binding partner. This chain is 14-3-3 protein zeta (14-3-3zeta), found in Bombyx mori (Silk moth).